Here is a 1623-residue protein sequence, read N- to C-terminus: MAAEASKTGPSRSSYQRMGRKSQPWGAAEIQCTRCGRRVSRSSGHHCELQCGHAFCELCLLMTEECTTIICPDCEVATAVNTRQRYYPMAGYIKEDSIMEKLQPKTIKNCSQDFKKTADQLTTGLERSASTDKTLLNSSAVMLDTNTAEEIDEALNTAHHSFEQLSIAGKALEHMQKQTIEERERVIEVVEKQFDQLLAFFDSRKKNLCEEFARTTDDYLSNLIKAKSYIEEKKNNLNAAMNIARALQLSPSLRTYCDLNQIIRTLQLTSDSELAQVSSPQLRNPPRLSVNCSEIICMFNNMGKIEFRDSTKCYPQENEIRQNVQKKYNNKKELSCYDTYPPLEKKKVDMSVLTSEAPPPPLQPETNDVHLEAKNFQPQKDVATASPKTIAVLPQMGSSPDVIIEEIIEDNVESSAELVFVSHVIDPCHFYIRKYSQIKDAKVLEKKVNEFCNRSSHLDPSDILELGARIFVSSIKNGMWCRGTITELIPIEGRNTRKPCSPTRLFVHEVALIQIFMVDFGNSEVLIVTGVVDTHVRPEHSAKQHIALNDLCLVLRKSEPYTEGLLKDIQPLAQPCSLKDIVPQNSNEGWEEEAKVEFLKMVNNKAVSMKVFREEDGVLIVDLQKPPPNKISSDMPVSLRDALVFMELAKFKSQSLRSHFEKNTTLHYHPPILPKEMTDVSVTVCHINSPGDFYLQLIEGLDILFLLKTIEEFYKSEDGENLEILCPVQDQACVAKFEDGIWYRAKVIGLPGHQEVEVKYVDFGNTAKITIKDVRKIKDEFLNAPEKAIKCKLAYIEPYKRTMQWSKEAKEKFEEKAQDKFMTCSVIKILEDNVLLVELFDSLGAPEMTTTSINDQLVKEGLASYEIGYILKDNSQKHIEVWDPSPEEIISNEVHNLNPVSAKSLPNENFQSLYNKELPVHICNVISPEKIYVQWLLTENLLNSLEEKMIAAYENSKWEPVKWENDMHCAVKIQDKNQWRRGQIIRMVTDTLVEVLLYDVGVELVVNVDCLRKLEENLKTMGRLSLECSLVDIRPAGGSDKWTATACDCLSLYLTGAVATIILQVDSEENNTTWPLPVKIFCRDEKGERVDVSKYLIKKGLALRERRINNLDNSHSLSEKSLEVPLEQEDSVVTNCIKTNFDPDKKTADIISEQKVSEFQEKILEPRTTRGYKPPAIPNMNVFEATVSCVGDDGTIFVVPKLSEFELIKMTNEIQSNLKCLGLLEPYFWKKGEACAVRGSDTLWYRGKVMEVVGGAVRVQYLDHGFTEKIPQCHLYPILLYPDIPQFCIPCQLHNTTPVGNVWQPDAIEVLQQLLSKRQVDIHIMELPKNPWEKLSIHLYFDGMSLSYFMAYYKYCTSEHTEEMLKEKPRSDHDKKYEEEQWEIRFEELLSAETDTPLLPPYLSSSLPSPGELYAVQVKHVVSPNEVYICLDSIETSNQSNQHSDTDDSGVSGESESESLDEALQRVNKKVEALPPLTDFRTEMPCLAEYDDGLWYRAKIVAIKEFNPLSILVQFVDYGSTAKLTLNRLCQIPSHLMRYPARAIKVLLAGFKPPLRDLGETRIPYCPKWSMEALWAMIDCLQGKQLYAVSMAPAPEQIVTLYDDEQHPVHMPLVEMGLADKDE.

Positions 1 to 22 are disordered; that stretch reads MAAEASKTGPSRSSYQRMGRKS. The segment at 32–75 adopts an RING-type zinc-finger fold; sequence CTRCGRRVSRSSGHHCELQCGHAFCELCLLMTEECTTIICPDCE. Lys234 carries the N6-acetyllysine modification. Tudor domains lie at 726 to 784, 962 to 1021, and 1228 to 1285; these read CPVQ…FLNA, KWEN…LKTM, and FWKK…PDIP. The interval 1438–1462 is disordered; the sequence is NQSNQHSDTDDSGVSGESESESLDE. The Tudor 4 domain maps to 1479-1539; sequence DFRTEMPCLA…CQIPSHLMRY (61 aa).

Interacts with MXD1, MXD3, MXD4, MXI1 and PIWIL1. Self-associates. As to expression, testis specific.

It localises to the cytoplasm. The protein localises to the nucleus. Seems to be involved in regulation of transcriptional activity of MYC. In vitro, inhibits DNA-binding activity of Mad-MAX heterodimers. Can recruit Mad transcriptional repressors (MXD1, MXD3, MXD4 and MXI1) to the cytoplasm. May be involved in spermiogenesis. The polypeptide is RING finger protein 17 (RNF17) (Homo sapiens (Human)).